The primary structure comprises 682 residues: DNA-directed RNA polymerase subunit beta' (682 aa).

Residues C69, C71, C87, and C90 each contribute to the Zn(2+) site. The Mg(2+) site is built by D489, D491, and D493.

It belongs to the RNA polymerase beta' chain family. RpoC1 subfamily. As to quaternary structure, in plastids the minimal PEP RNA polymerase catalytic core is composed of four subunits: alpha, beta, beta', and beta''. When a (nuclear-encoded) sigma factor is associated with the core the holoenzyme is formed, which can initiate transcription. The cofactor is Mg(2+). It depends on Zn(2+) as a cofactor.

The protein resides in the plastid. It localises to the chloroplast. The catalysed reaction is RNA(n) + a ribonucleoside 5'-triphosphate = RNA(n+1) + diphosphate. DNA-dependent RNA polymerase catalyzes the transcription of DNA into RNA using the four ribonucleoside triphosphates as substrates. The sequence is that of DNA-directed RNA polymerase subunit beta' from Acorus gramineus (Dwarf sweet flag).